The primary structure comprises 482 residues: MAAELYPASINTNLPNSNSTAVTAASKKTIVQVTQTVTTPTTTATQQNINNNNVETASWQSTHPTLRERNALMFNNELMADVHFVVGPPGASQKVPAHKYVLAVGSSVFGAMFYGDLAEGESEIHIPDVEPAAFLILLKYMYSDEIELEADTVLATLYAAKKYIVPALAKACVTFLETSLEAKNACVLLSQSRLFEEPELTLRCWEVIDAQAELALHSEGFCEIDLQTLEIILKRETLNTREAVVFQAALDWAVAECKRQGLGPTARNKRAVLGKALYLVRIPTMTLEEFANGAAQSDVLTLEETHDVFLWYTAANKPKLEFPLQKRKGLTPQRCHRFQSSAYRSNQWRYRGRCDSIQFAVDKRIFIAGLGLYGSSGGKAEYSVKIELKRQGVTLAQNLTKFISDGSSNTFSVWFEHPVQVEQDTFYTVSAVLDGNELSYFGQEGMTEVQCGKVTFQFQCSSDSTNGTGVQGGQIPELVFYA.

The BTB domain occupies 80-150 (ADVHFVVGPP…MYSDEIELEA (71 aa)).

Interacts with cul3. Interacts (via BTB domain) with zbtb16/plzf. In embryos, expressed in the cranial ganglia.

The protein localises to the cytoplasm. It is found in the nucleus. Adapter protein for the cul3 E3 ubiquitin-protein ligase complex. Promotes the export of zbtb16/plzf from the nucleus to the cytoplasm and targets zbtb16/plzf for ubiquitination and degradation. Up-regulates neurog1 expression and antagonizes zbtb16/plzf, to promote neurogenesis. The protein is BTB/POZ domain-containing protein 6-B (btbd6b) of Danio rerio (Zebrafish).